A 581-amino-acid polypeptide reads, in one-letter code: Frizzled-3 (581 aa).

Residues 1–19 (MYAASILILHLTWAVATIA) form the signal peptide. Residues 20-237 (ANGAGHNGPV…TSSQKKTSET (218 aa)) lie on the Extracellular side of the membrane. One can recognise an FZ domain in the interval 35–156 (PNGLQCQPIA…PEKHELCMQI (122 aa)). Disulfide bonds link C40–C101, C48–C94, C85–C123, C112–C153, and C116–C141. N54 carries an N-linked (GlcNAc...) asparagine glycan. The N-linked (GlcNAc...) asparagine glycan is linked to N206. The helical transmembrane segment at 238-258 (LILGLSAVCFVLTLFALVTFW) threads the bilayer. Over 259-270 (AEPTRFGYPERP) the chain is Cytoplasmic. Residues 271–291 (VLFLCLCYNLFSVCYLERIVF) form a helical membrane-spanning segment. Residues 292–321 (HNQARMHDVELQGRLMRPGCLLTPPCLASY) are Extracellular-facing. A helical membrane pass occupies residues 322–342 (ITTSYLSLCAASWWLIFALCF). Residues 343-359 (YLSSHKKWSSEALEKRS) lie on the Cytoplasmic side of the membrane. A helical transmembrane segment spans residues 360-380 (GLFHVLAWVPPLAPPIAALLL). The Extracellular portion of the chain corresponds to 381–393 (EKVRPSELTGMCY). A helical transmembrane segment spans residues 394-414 (APGFVELPALVLLLLGLYFTL). Over 415–442 (RASRSLLSLQQQLQPTLAHHRFGQIRKR) the chain is Cytoplasmic. The chain crosses the membrane as a helical span at residues 443–463 (FVLFSLLYFAPTTAGVVAALC). Residues 464 to 488 (ERYADSVPSCSTPDDCLSPTPLSAW) lie on the Extracellular side of the membrane. A helical transmembrane segment spans residues 489–509 (PALVRIFFQLVGGTLTGLWVW). Residues 510 to 581 (SRKTCESYRN…PVYNPNQSRV (72 aa)) are Cytoplasmic-facing. Residues 579 to 581 (SRV) carry the PDZ-binding motif.

The protein belongs to the G-protein coupled receptor Fz/Smo family. As to expression, wing, leg and eye imaginal disks. In embryos, expressed is seen in brain, proventriculus, Malpighian tubules, anal plate and visceral mesoderm of parasegment 8.

It localises to the membrane. Functionally, receptor for Wnt proteins. Most of frizzled receptors are coupled to the beta-catenin canonical signaling pathway, which leads to the activation of disheveled proteins, inhibition of GSK-3 kinase, nuclear accumulation of beta-catenin and activation of Wnt target genes. A second signaling pathway involving PKC and calcium fluxes has been seen for some family members, but it is not yet clear if it represents a distinct pathway or if it can be integrated in the canonical pathway, as PKC seems to be required for Wnt-mediated inactivation of GSK-3 kinase. Both pathways seem to involve interactions with G-proteins. Required to coordinate the cytoskeletons of epidermal cells to produce a parallel array of cuticular hairs and bristles. The polypeptide is Frizzled-3 (fz3) (Drosophila melanogaster (Fruit fly)).